Reading from the N-terminus, the 84-residue chain is UPF0457 protein BCE33L2961 (84 aa).

Belongs to the UPF0457 family.

This is UPF0457 protein BCE33L2961 from Bacillus cereus (strain ZK / E33L).